The chain runs to 245 residues: 5-oxoprolinase subunit A (245 aa).

Belongs to the LamB/PxpA family. In terms of assembly, forms a complex composed of PxpA, PxpB and PxpC.

It carries out the reaction 5-oxo-L-proline + ATP + 2 H2O = L-glutamate + ADP + phosphate + H(+). Its function is as follows. Catalyzes the cleavage of 5-oxoproline to form L-glutamate coupled to the hydrolysis of ATP to ADP and inorganic phosphate. This chain is 5-oxoprolinase subunit A, found in Erwinia tasmaniensis (strain DSM 17950 / CFBP 7177 / CIP 109463 / NCPPB 4357 / Et1/99).